The primary structure comprises 423 residues: uncharacterized protein (423 aa).

The protein belongs to the asfivirus E423R family.

It localises to the virion. This is an uncharacterized protein from African swine fever virus (isolate Tick/South Africa/Pretoriuskop Pr4/1996) (ASFV).